A 147-amino-acid chain; its full sequence is UPF0735 ACT domain-containing protein RBAM_024960 (147 aa).

The ACT domain maps to 70-145; the sequence is TLFFHLEDRS…FIEKVEILGS (76 aa).

It belongs to the UPF0735 family.

In Bacillus velezensis (strain DSM 23117 / BGSC 10A6 / LMG 26770 / FZB42) (Bacillus amyloliquefaciens subsp. plantarum), this protein is UPF0735 ACT domain-containing protein RBAM_024960.